Consider the following 402-residue polypeptide: MNKLLCCALVFLDISIKWTTQETFPPKYLHYDPESSRQLMCDKCPPGTFLKQPCTARRKTVCAPCPDHYYTDTWHTSDECLYCSPVCKELQYVKQECSRTHNRVCECEEGRYLELEFCLKHRSCPPGFGVLHPGTPERNTVCKRCPDGFFSNETSSKAPCRKHTNCSAFGLLLTQKGNATHDNICSGSSESSTHKCGIDMTLCEEAFFRFAVPTKLTPNWLSVLVDNLPGTKVNAESIERIKQRHNSREQTFQLLKLWKHQNKDQDMVKKIIQDIDLCENSVRRHIGHLNLTFEQLLKLMESLPGKKVTTEDVEKTVKTCKSSEQLLKLLSLWRIKNGDQDTRKGLLHALKHLKTYHFPKTVIQSLKKTIRFLHSFTMYRLYRKLFLEMIGNQVQSLKISCL.

The first 21 residues, 1 to 21 (MNKLLCCALVFLDISIKWTTQ), serve as a signal peptide directing secretion. 4 TNFR-Cys repeats span residues 24–62 (FPPK…KTVC), 64–105 (PCPD…NRVC), 106–142 (ECEE…NTVC), and 144–185 (RCPD…DNIC). 8 disulfides stabilise this stretch: C41–C54, C44–C62, C65–C80, C83–C97, C87–C105, C107–C118, C124–C142, and C145–C160. Residues N165 and N178 are each glycosylated (N-linked (GlcNAc...) asparagine). C166 and C185 are disulfide-bonded. Death domains lie at 198 to 269 (IDMT…DMVK) and 270 to 365 (KIIQ…VIQS).

As to quaternary structure, homodimer. Interacts with TNFSF10 and TNFSF11. N-glycosylated. Contains sialic acid residues.

Its subcellular location is the secreted. Acts as a decoy receptor for TNFSF11/RANKL and thereby neutralizes its function in osteoclastogenesis. Inhibits the activation of osteoclasts and promotes osteoclast apoptosis. Bone homeostasis seems to depend on the local ratio between TNFSF11 and TNFRSF11B. May also play a role in preventing arterial calcification. May act as decoy receptor for TNFSF10/TRAIL and protect against apoptosis. TNFSF10/TRAIL binding blocks the inhibition of osteoclastogenesis. The polypeptide is Tumor necrosis factor receptor superfamily member 11B (TNFRSF11B) (Bos taurus (Bovine)).